The chain runs to 115 residues: Large ribosomal subunit protein bL19 (115 aa).

It belongs to the bacterial ribosomal protein bL19 family.

Functionally, this protein is located at the 30S-50S ribosomal subunit interface and may play a role in the structure and function of the aminoacyl-tRNA binding site. The chain is Large ribosomal subunit protein bL19 from Streptococcus suis (strain 98HAH33).